Reading from the N-terminus, the 136-residue chain is Sec-independent protein translocase protein TatB (136 aa).

The helical transmembrane segment at 1-21 threads the bilayer; it reads MFDIGFWELVLISVIGLVVLG. The interval 66 to 136 is disordered; it reads ASKQGLSDLD…TTPPRQDKNE (71 aa). Composition is skewed to basic and acidic residues over residues 77-89 and 96-107; these read ELQK…KETA and YKKDIDDIKTSL. Residues 108-130 show a composition bias toward polar residues; the sequence is DKNPSGTTQQENSILDSSKTTPP.

This sequence belongs to the TatB family. In terms of assembly, the Tat system comprises two distinct complexes: a TatABC complex, containing multiple copies of TatA, TatB and TatC subunits, and a separate TatA complex, containing only TatA subunits. Substrates initially bind to the TatABC complex, which probably triggers association of the separate TatA complex to form the active translocon.

The protein localises to the cell inner membrane. Functionally, part of the twin-arginine translocation (Tat) system that transports large folded proteins containing a characteristic twin-arginine motif in their signal peptide across membranes. Together with TatC, TatB is part of a receptor directly interacting with Tat signal peptides. TatB may form an oligomeric binding site that transiently accommodates folded Tat precursor proteins before their translocation. The polypeptide is Sec-independent protein translocase protein TatB (Psychromonas ingrahamii (strain DSM 17664 / CCUG 51855 / 37)).